Consider the following 122-residue polypeptide: Succinate dehydrogenase assembly factor 2, mitochondrial (122 aa).

This sequence belongs to the SDHAF2 family. As to quaternary structure, interacts with the flavoprotein subunit within the SDH catalytic dimer.

Its subcellular location is the mitochondrion matrix. Its function is as follows. Plays an essential role in the assembly of succinate dehydrogenase (SDH), an enzyme complex (also referred to as respiratory complex II) that is a component of both the tricarboxylic acid (TCA) cycle and the mitochondrial electron transport chain, and which couples the oxidation of succinate to fumarate with the reduction of ubiquinone (coenzyme Q) to ubiquinol. Required for flavinylation (covalent attachment of FAD) of the flavoprotein subunit of the SDH catalytic dimer. In Caenorhabditis briggsae, this protein is Succinate dehydrogenase assembly factor 2, mitochondrial.